The sequence spans 548 residues: uncharacterized protein (548 aa).

The DhaL domain occupies 8-200 (KLFADMIIQG…LLCVYEGFLK (193 aa)).

This is an uncharacterized protein from Staphylococcus aureus (strain MRSA252).